The chain runs to 297 residues: Elongation factor Ts (297 aa).

The interval 82–85 (TDFV) is involved in Mg(2+) ion dislocation from EF-Tu. The span at 223–265 (AQTAAAAETAPPEVSEPEPAAAVTAEEPTPEPVAAAEQPAEPV) shows a compositional bias: low complexity. The segment at 223 to 297 (AQTAAAAETA…GKSRSNKKKK (75 aa)) is disordered. A compositionally biased stretch (basic residues) spans 286-297 (SGGKSRSNKKKK).

Belongs to the EF-Ts family.

The protein resides in the cytoplasm. Associates with the EF-Tu.GDP complex and induces the exchange of GDP to GTP. It remains bound to the aminoacyl-tRNA.EF-Tu.GTP complex up to the GTP hydrolysis stage on the ribosome. The sequence is that of Elongation factor Ts from Thermosynechococcus vestitus (strain NIES-2133 / IAM M-273 / BP-1).